Consider the following 439-residue polypeptide: Eukaryotic translation initiation factor 2 subunit gamma (439 aa).

Residues Gln-11 to Val-215 enclose the tr-type G domain. A G1 region spans residues Gly-20–Ser-27. A GTP-binding site is contributed by Ala-23–Thr-28. A G2 region spans residues Asn-48–Lys-52. The tract at residues Asp-103 to Gly-106 is G3. GTP-binding positions include Asn-159 to Asp-162 and Ala-193 to Gln-195. Residues Asn-159–Asp-162 form a G4 region. The tract at residues Ala-193–Gln-195 is G5. The tract at residues Gly-415–Tyr-427 is interacts with CDC123.

The protein belongs to the TRAFAC class translation factor GTPase superfamily. Classic translation factor GTPase family. EIF2G subfamily. In terms of assembly, eukaryotic translation initiation factor 2 eIF2 is a heterotrimeric complex composed of an alpha, a beta and a gamma subunit. The factors eIF-1, eIF-2, eIF-3, TIF5/eIF-5 and methionyl-tRNAi form a multifactor complex (MFC) that may bind to the 40S ribosome.

The protein resides in the cytoplasm. The protein localises to the cytosol. It carries out the reaction GTP + H2O = GDP + phosphate + H(+). As a subunit of eukaryotic initiation factor 2 eIF2, involved in the early steps of protein synthesis. In the presence of GTP, eIF-2 forms a ternary complex with initiator tRNA Met-tRNAi and then recruits the 40S ribosomal complex and initiation factors eIF-1, eIF-1A and eIF-3 to form the 43S pre-initiation complex (43S PIC), a step that determines the rate of protein translation. The 43S PIC binds to mRNA and scans downstream to the initiation codon, where it forms a 48S initiation complex by codon-anticodon base pairing. This leads to the displacement of eIF-1 to allow GTPase-activating protein (GAP) eIF-5-mediated hydrolysis of eIF2-bound GTP. Hydrolysis of GTP and release of Pi, which makes GTP hydrolysis irreversible, causes the release of the eIF-2-GDP binary complex from the 40S subunit, an event that is essential for the subsequent joining of the 60S ribosomal subunit to form an elongation-competent 80S ribosome. In order for eIF-2 to recycle and catalyze another round of initiation, the GDP bound to eIF-2 must be exchanged with GTP by way of a reaction catalyzed by GDP-GTP exchange factor (GEF) eIF-2B. The sequence is that of Eukaryotic translation initiation factor 2 subunit gamma from Encephalitozoon cuniculi (strain GB-M1) (Microsporidian parasite).